A 152-amino-acid chain; its full sequence is Deoxyuridine 5'-triphosphate nucleotidohydrolase (152 aa).

Residues 72–74 (RSG), N85, 89–91 (TID), and K99 each bind substrate.

This sequence belongs to the dUTPase family. Mg(2+) serves as cofactor.

The catalysed reaction is dUTP + H2O = dUMP + diphosphate + H(+). Its pathway is pyrimidine metabolism; dUMP biosynthesis; dUMP from dCTP (dUTP route): step 2/2. Its function is as follows. This enzyme is involved in nucleotide metabolism: it produces dUMP, the immediate precursor of thymidine nucleotides and it decreases the intracellular concentration of dUTP so that uracil cannot be incorporated into DNA. In Bradyrhizobium diazoefficiens (strain JCM 10833 / BCRC 13528 / IAM 13628 / NBRC 14792 / USDA 110), this protein is Deoxyuridine 5'-triphosphate nucleotidohydrolase.